We begin with the raw amino-acid sequence, 398 residues long: Elongation factor Tu (398 aa).

The region spanning 10 to 207 is the tr-type G domain; that stretch reads KPHVNIGTIG…TVDSYIPEPE (198 aa). The segment at 19–26 is G1; sequence GHVDHGKT. 19–26 contributes to the GTP binding site; sequence GHVDHGKT. Threonine 26 is a Mg(2+) binding site. Positions 63–67 are G2; sequence GITIN. The tract at residues 84 to 87 is G3; the sequence is DAPG. GTP contacts are provided by residues 84 to 88 and 139 to 142; these read DAPGH and NKVD. A G4 region spans residues 139 to 142; that stretch reads NKVD. Residues 177–179 form a G5 region; sequence SAL.

The protein belongs to the TRAFAC class translation factor GTPase superfamily. Classic translation factor GTPase family. EF-Tu/EF-1A subfamily. Monomer.

Its subcellular location is the cytoplasm. The catalysed reaction is GTP + H2O = GDP + phosphate + H(+). In terms of biological role, GTP hydrolase that promotes the GTP-dependent binding of aminoacyl-tRNA to the A-site of ribosomes during protein biosynthesis. This is Elongation factor Tu from Streptococcus pyogenes serotype M1.